The primary structure comprises 1997 residues: Autophagy-related protein 2 homolog A (1997 aa).

A Chorein N-terminal domain is found at 17 to 119; the sequence is CRYLLQHYLG…RGAAQGTESQ (103 aa). Disordered stretches follow at residues 241 to 281, 1292 to 1323, 1371 to 1414, 1492 to 1534, and 1684 to 1718; these read TSVQ…IQQI, HCPPKPEPPTEIAGQKLQPPEGPSSLPPCLPA, EEIK…TDTD, SSRP…TQGG, and RLDGPAKSSSDCELEQETSQGSTEDETMSPSSSTD. Positions 1311–1321 are enriched in pro residues; the sequence is PEGPSSLPPCL. Polar residues-rich tracts occupy residues 1393–1408, 1493–1532, and 1690–1718; these read RVSQESLGLSDTSGDS, SRPNSARAQSPRSRTSFHNARGSPSRSSVTNRPQNTWRTQ, and KSSSDCELEQETSQGSTEDETMSPSSSTD.

This sequence belongs to the ATG2 family.

It localises to the preautophagosomal structure membrane. The protein localises to the lipid droplet. Its subcellular location is the endoplasmic reticulum membrane. The catalysed reaction is a 1,2-diacyl-sn-glycero-3-phospho-L-serine(in) = a 1,2-diacyl-sn-glycero-3-phospho-L-serine(out). The enzyme catalyses a 1,2-diacyl-sn-glycero-3-phosphoethanolamine(in) = a 1,2-diacyl-sn-glycero-3-phosphoethanolamine(out). Its function is as follows. Lipid transfer protein involved in autophagosome assembly. Tethers the edge of the isolation membrane (IM) to the endoplasmic reticulum (ER) and mediates direct lipid transfer from ER to IM for IM expansion. Binds to the ER exit site (ERES), which is the membrane source for autophagosome formation, and extracts phospholipids from the membrane source and transfers them to atg9 (atg9a or atg9b) to the IM for membrane expansion. Also regulates lipid droplets morphology and distribution within the cell. The chain is Autophagy-related protein 2 homolog A from Xenopus tropicalis (Western clawed frog).